The chain runs to 207 residues: dTDP-4-dehydrorhamnose 3-epimerase (207 aa).

Substrate is bound by residues R23, D28, 47–49 (QAN), and R59. H62 acts as the Proton acceptor in catalysis. Substrate-binding residues include K72 and H119. Residue Y132 is the Proton donor of the active site. Positions 143 and 167 each coordinate substrate.

This sequence belongs to the dTDP-4-dehydrorhamnose 3,5-epimerase family.

It participates in antibiotic biosynthesis; novobiocin biosynthesis. Functionally, dTDP-6-deoxy-D-xylo-4-hexulose 3-epimerase that acts together with NovU to catalyze the formation of dTDP-4-keto-6-deoxy-5-C-methyl-L-lyxo-hexose from dTDP-4-keto-6-deoxy-D-glucose in the novobiocin biosynthesis pathway, an aminocoumarin family antibiotic that targets bacterial DNA gyrases. This chain is dTDP-4-dehydrorhamnose 3-epimerase, found in Streptomyces niveus (Streptomyces spheroides).